Reading from the N-terminus, the 118-residue chain is uncharacterized protein (118 aa).

4 helical membrane-spanning segments follow: residues 5–20 (IVFY…SVVM), 25–42 (VIRT…LLYF), 53–73 (ALAI…FIIL), and 83–103 (LFFT…SLSI).

The protein localises to the cell membrane. This is an uncharacterized protein from Bacillus subtilis (strain 168).